We begin with the raw amino-acid sequence, 1165 residues long: Disease resistance protein RPS4B (1165 aa).

The TIR domain occupies P12–L174. Residue E86 is part of the active site. The NB-ARC domain maps to K211 to Q474. An LRR 1 repeat occupies S592–P613. One copy of the LRR 2; degenerate repeat lies at L614–D635. LRR repeat units lie at residues P636–T659, N684–N703, L704–P725, E726–L748, L772–K794, and S795–Y818. Residues L819 to Q836 form an LRR 9; degenerate repeat. Residues V837–Y863 form an LRR 10 repeat.

This sequence belongs to the disease resistance TIR-NB-LRR family. Interacts with RRS1B. RPS4B-RRS1B heterodimer interacts with the bacterial effectors AvrRps4 and PopP2.

Its subcellular location is the nucleus. The enzyme catalyses NAD(+) + H2O = ADP-D-ribose + nicotinamide + H(+). In terms of biological role, disease resistance (R) protein that specifically recognizes the AvrRps4 type III effector avirulence protein from P.syringae. Heterodimerization with RRS1B is required to form a functional complex to recognize AvrRps4 and to mediate the hypersensitive response. The polypeptide is Disease resistance protein RPS4B (Arabidopsis thaliana (Mouse-ear cress)).